We begin with the raw amino-acid sequence, 64 residues long: Disintegrin schistatin (64 aa).

The Disintegrin domain maps to 1–64 (NSVHPCCDPV…PDCPRNRYNV (64 aa)). 4 cysteine pairs are disulfide-bonded: Cys-6-Cys-29, Cys-20-Cys-26, Cys-25-Cys-50, and Cys-38-Cys-57. Residues 42–44 (RGD) carry the Cell attachment site motif.

It belongs to the disintegrin family. Dimeric disintegrin subfamily. In terms of assembly, homodimer; disulfide-linked. In terms of tissue distribution, expressed by the venom gland.

The protein localises to the secreted. May bind to both alpha-IIb/beta-3 (ITGA2B/ITGB3) and alpha-V/beta-3 (ITGAV/ITGB3) integrins, and may inhibit platelet aggregation. The chain is Disintegrin schistatin from Echis carinatus (Saw-scaled viper).